The chain runs to 485 residues: METVQLRNNPRRHLKKLSEESLNKQPEEVFDVLEKLGEGSYGSVYKASHKETSQIVAIKQIPVESDLQEIIKEIAIMQQCDSLHVVKYYGSYFKNTDLWIVMEFCGGGSISDIIRLRKQTLKEDETATILQSTLKGLEYLHFMRKIHRDIKAGNILLNSEGTAKLADFGVAGQLTDTMAKRNTVIGTPFWMAPEVIQEIGYNCVADIWSLGITAIEMAEGKPPYAEIHPMRAIFMIPSNPPPTFRKPELWSKDFVDFINLCLVKNPELRSSATELLQHPFIKTAKGESILRHLINEAQDAKLKRTELKQREVEPEEEENADEDEADVGTMVQAGSKDLNTMKEFSTMNEAADCTMVEKDKLNTQMGTMLINDEDEEETGTMKQCTEPVQPAKPSFLEYFEQKENQFGTPEKTTPAPSTDPSEWKIPLNGDYSFLKDWSVTELQLRLNSLDPMMEQEIEEIHHKYQAKRQPILEAIESKKRRQQNF.

The Protein kinase domain occupies 30–281 (FDVLEKLGEG…ATELLQHPFI (252 aa)). Residues 36–44 (LGEGSYGSV) and Lys59 contribute to the ATP site. Residue Asp149 is the Proton acceptor of the active site. At Thr183 the chain carries Phosphothreonine; by autocatalysis. Residues 287–313 (ESILRHLINEAQDAKLKRTELKQREVE) adopt a coiled-coil conformation. In terms of domain architecture, SARAH spans 431–478 (YSFLKDWSVTELQLRLNSLDPMMEQEIEEIHHKYQAKRQPILEAIESK).

This sequence belongs to the protein kinase superfamily. STE Ser/Thr protein kinase family. STE20 subfamily. In terms of assembly, homodimer; mediated via the coiled-coil region. It depends on Mg(2+) as a cofactor. In terms of processing, autophosphorylated on Thr-183. Post-translationally, proteolytically cleaved by caspase-3 during apoptosis at Asp-326 resulting in a 37 kDa form. Proteolytic cleavage results in kinase activation and nuclear translocation of the truncated form (MST1/N).

Its subcellular location is the cytoplasm. It is found in the nucleus. It carries out the reaction L-seryl-[protein] + ATP = O-phospho-L-seryl-[protein] + ADP + H(+). The catalysed reaction is L-threonyl-[protein] + ATP = O-phospho-L-threonyl-[protein] + ADP + H(+). With respect to regulation, the C-terminal non-catalytic region inhibits the kinase activity, the enzyme is activated by caspase-cleavage. Homodimerization and autophosphorylation of Thr-183 is also required for full activation. In terms of biological role, stress-activated, pro-apoptotic kinase which, following caspase-cleavage, enters the nucleus and induces chromatin condensation followed by internucleosomal DNA fragmentation. Key component of the Hippo signaling pathway which plays a pivotal role in organ size control and tumor suppression by restricting proliferation and promoting apoptosis. The core of this pathway is composed of a kinase cascade wherein stk3/mst2 and stk4/mst1, in complex with its regulatory protein sav1, phosphorylates and activates lats1/2 in complex with its regulatory protein mob1, which in turn phosphorylates and inactivates yap1 oncoprotein and wwtr1/taz. Phosphorylation of yap1 by lats2 inhibits its translocation into the nucleus to regulate cellular genes important for cell proliferation, cell death, and cell migration. Phosphorylates 'Ser-14' of histone H2B (H2BS14ph) during apoptosis. The chain is Serine/threonine-protein kinase 4 (stk4) from Xenopus tropicalis (Western clawed frog).